Consider the following 378-residue polypeptide: Alpha-galactosidase (378 aa).

Positions 1–15 (MVKSPGTEDYTRRSL) are cleaved as a signal peptide. Intrachain disulfides connect C36–C68 and C116–C147. D145 (nucleophile) is an active-site residue. Residue 178–182 (EWGEE) coordinates substrate. D200 acts as the Proton donor in catalysis.

It belongs to the glycosyl hydrolase 27 family.

The enzyme catalyses Hydrolysis of terminal, non-reducing alpha-D-galactose residues in alpha-D-galactosides, including galactose oligosaccharides, galactomannans and galactolipids.. Functionally, preferentially cleaves alpha-1,3 and alpha-1,4 glycoside linkages. Involved in the hydrolysis of the galactomannan, it splits alpha-linked galactose moieties. It is particularly suitable for the hydrolysis of guar gum to a gum with improved gelling properties. Can cleave terminal alpha-1,3-linked galactose residues responsible for blood group B specificity from the surface of erythrocytes thereby converting these cells serologically to group O. In Coffea arabica (Arabian coffee), this protein is Alpha-galactosidase.